A 180-amino-acid polypeptide reads, in one-letter code: Major urinary protein 5 (180 aa).

The signal sequence occupies residues methionine 1–alanine 18. Cysteine 82 and cysteine 175 are disulfide-bonded.

Belongs to the calycin superfamily. Lipocalin family.

It is found in the secreted. Major urinary proteins (Mups) bind pheromones, and thus stabilize them to allow slow release into the air from urine marks. May protect pheromones from oxidation. May also act as pheromones themselves. In this context, they play a role in the regulation of social behaviors, such as aggression, mating, pup-suckling, territory establishment and dominance. This Mus musculus (Mouse) protein is Major urinary protein 5.